A 448-amino-acid chain; its full sequence is Homogentisate 1,2-dioxygenase (448 aa).

His-303 serves as the catalytic Proton acceptor. Fe cation-binding residues include His-346 and Glu-352. 2 residues coordinate homogentisate: Tyr-361 and His-382. A Fe cation-binding site is contributed by His-382.

Belongs to the homogentisate dioxygenase family. As to quaternary structure, hexamer; dimer of trimers. It depends on Fe cation as a cofactor.

It catalyses the reaction homogentisate + O2 = 4-maleylacetoacetate + H(+). Its pathway is amino-acid degradation; L-phenylalanine degradation; acetoacetate and fumarate from L-phenylalanine: step 4/6. Involved in the catabolism of homogentisate (2,5-dihydroxyphenylacetate or 2,5-OH-PhAc), a central intermediate in the degradation of phenylalanine and tyrosine. Catalyzes the oxidative ring cleavage of the aromatic ring of homogentisate to yield maleylacetoacetate. The protein is Homogentisate 1,2-dioxygenase of Rhodopseudomonas palustris (strain BisB18).